A 228-amino-acid chain; its full sequence is Delta-type opioid receptor (228 aa).

A helical transmembrane segment spans residues 1–3 (GIV). Over 4–13 (RYTKMKTATN) the chain is Cytoplasmic. A helical membrane pass occupies residues 14–38 (IYIFNLALADALATSTLPFQSAKYL). Residues 39-50 (METWPFGELLCK) are Extracellular-facing. A disulfide bridge links C49 with C126. A helical membrane pass occupies residues 51–72 (AVLSIDYYNMFTSIFTLTMMSV). The Cytoplasmic portion of the chain corresponds to 73–91 (DRYIAVCHPVKALDFRTPA). Residues 92–114 (KAKLINICIWVLASGVGVPIMVM) form a helical membrane-spanning segment. Residues 115–134 (AVTRPRDGAVVCMLQFPSPS) are Extracellular-facing. The chain crosses the membrane as a helical span at residues 135–166 (WYWDTVTKICVFLFAFVVPILVITVCYGLMLL). The Cytoplasmic portion of the chain corresponds to 167-189 (RLRSVRLLSGSKEKDRSLRRITR). Residues 190–212 (MVLVVVGAFVVCWAPIHIFVIVW) form a helical membrane-spanning segment. Residues 213–227 (TLVDIDRRDPLVVAA) are Extracellular-facing.

The protein belongs to the G-protein coupled receptor 1 family. May form homooligomers. Forms a heterodimer with OPRM1. Interacts with GPRASP1. Interacts with RTP4; the interaction promotes cell surface localization of the OPRD1-OPRM1 heterodimer. Ubiquitinated. A basal ubiquitination seems not to be related to degradation. Ubiquitination is increased upon formation of OPRM1:OPRD1 oligomers leading to proteasomal degradation; the ubiquitination is diminished by RTP4. Detected in myenteric plexus and smooth muscle (at protein level). Detected in brain and intestine.

It localises to the cell membrane. In terms of biological role, G-protein coupled receptor that functions as a receptor for endogenous enkephalins and for a subset of other opioids. Ligand binding causes a conformation change that triggers signaling via guanine nucleotide-binding proteins (G proteins) and modulates the activity of down-stream effectors, such as adenylate cyclase. Signaling leads to the inhibition of adenylate cyclase activity. Inhibits neurotransmitter release by reducing calcium ion currents and increasing potassium ion conductance. Plays a role in the perception of pain and in opiate-mediated analgesia. Plays a role in developing analgesic tolerance to morphine. The polypeptide is Delta-type opioid receptor (OPRD1) (Sus scrofa (Pig)).